The sequence spans 23 residues: Brevinin-1SE (23 aa).

Cysteine 17 and cysteine 23 are joined by a disulfide.

As to expression, expressed by the skin glands.

It is found in the secreted. Its function is as follows. Mast cell degranulating peptide. Causes histamine release from rat peritoneal mast cells in vitro. Has antibacterial activity against the Gram-negative bacterium E.coli K12 and Gram-positive bacterium M.luteus NCT C2665. This is Brevinin-1SE from Lithobates sevosus (Dusky gopher frog).